The chain runs to 316 residues: Olfactory receptor 5P79 (316 aa).

Residues 1–28 (MGILKDGNHTAVTEFILLGLTDDPVLKV) are Extracellular-facing. The N-linked (GlcNAc...) asparagine glycan is linked to N8. Residues 29-49 (VLFTIILCIYLVTVSGNLSTI) form a helical membrane-spanning segment. The Cytoplasmic segment spans residues 50–57 (LLIRVSSQ). The chain crosses the membrane as a helical span at residues 58–78 (LHHPMYFFLSHLASVDIGISS). The Extracellular segment spans residues 79-102 (SVTPNMLVNFLLERSTISYLGCGI). Cysteines 100 and 192 form a disulfide. Residues 103–123 (QLGSGAFFGSTESFLLAAMAY) form a helical membrane-spanning segment. The Cytoplasmic portion of the chain corresponds to 124–136 (DHFMAICNPLLYS). Residues 137-157 (TKMSTQVCIQLLVGSYIGGFL) traverse the membrane as a helical segment. At 158 to 199 (NASSFILSFFSFLFCGPNKVNHFFCDFTPLVELSCSDNSVLL) the chain is on the extracellular side. Residues 200–220 (ILDSFSAGSIIVITVLVIAIS) traverse the membrane as a helical segment. Over 221-240 (YTYILITILKMHSTEGRHKA) the chain is Cytoplasmic. A helical membrane pass occupies residues 241–261 (FSTCTSHLTAVTVFYGTVTFI). At 262–274 (YVMPKSSYSTDQN) the chain is on the extracellular side. Residues 275–297 (KVLSVFYMIAIAIPMLNPLIYSL) form a helical membrane-spanning segment. Residues 298 to 316 (RNNEIKNALKRQLSKKTFS) are Cytoplasmic-facing.

It belongs to the G-protein coupled receptor 1 family.

The protein localises to the cell membrane. In terms of biological role, potential odorant receptor. The polypeptide is Olfactory receptor 5P79 (Mus musculus (Mouse)).